The following is a 227-amino-acid chain: Fibrillarin-like rRNA/tRNA 2'-O-methyltransferase (227 aa).

S-adenosyl-L-methionine is bound by residues 86 to 87 (TT), 105 to 106 (EF), 130 to 131 (DA), and 150 to 153 (DVAQ).

This sequence belongs to the methyltransferase superfamily. Fibrillarin family. As to quaternary structure, interacts with nop5. Component of box C/D small ribonucleoprotein (sRNP) particles that contain rpl7ae, FlpA and nop5, plus a guide RNA.

Functionally, involved in pre-rRNA and tRNA processing. Utilizes the methyl donor S-adenosyl-L-methionine to catalyze the site-specific 2'-hydroxyl methylation of ribose moieties in rRNA and tRNA. Site specificity is provided by a guide RNA that base pairs with the substrate. Methylation occurs at a characteristic distance from the sequence involved in base pairing with the guide RNA. The protein is Fibrillarin-like rRNA/tRNA 2'-O-methyltransferase of Pyrococcus abyssi (strain GE5 / Orsay).